Consider the following 314-residue polypeptide: Malate dehydrogenase (314 aa).

Residues 11-16 and Asp-35 contribute to the NAD(+) site; that span reads GSGNIG. Residues Arg-84 and Arg-90 each coordinate substrate. Residues Asn-97 and 120 to 122 contribute to the NAD(+) site; that span reads ITN. Substrate-binding residues include Asn-122 and Arg-153. His-177 functions as the Proton acceptor in the catalytic mechanism.

Belongs to the LDH/MDH superfamily. MDH type 3 family.

The catalysed reaction is (S)-malate + NAD(+) = oxaloacetate + NADH + H(+). In terms of biological role, catalyzes the reversible oxidation of malate to oxaloacetate. The chain is Malate dehydrogenase from Rickettsia prowazekii (strain Madrid E).